The chain runs to 209 residues: Guanylyl cyclase-activating protein 3 (209 aa).

The N-myristoyl glycine moiety is linked to residue Gly2. At Asn3 the chain carries Deamidated asparagine. EF-hand domains follow at residues 15–50 (PTQE…QGLN), 52–87 (KANK…IMQE), 88–123 (KMEQ…VQAL), and 130–165 (SPEE…DQDL). Ca(2+)-binding residues include Asp65, Asn67, Asp69, Glu76, Asp101, Asp103, Asn105, Ser107, Glu112, Asp143, Asn145, Asp147, Glu149, and Glu154. The tract at residues 187-209 (QPDMETDSSKSPDKAGLGKVKMK) is disordered.

In terms of tissue distribution, retina.

In terms of biological role, stimulates guanylyl cyclase 1 (GC1) and GC2 when free calcium ions concentration is low and inhibits guanylyl cyclases when free calcium ions concentration is elevated. This Ca(2+)-sensitive regulation of guanylyl cyclase (GC) is a key event in recovery of the dark state of rod photoreceptors following light exposure. This is Guanylyl cyclase-activating protein 3 (GUCA1C) from Homo sapiens (Human).